The following is a 429-amino-acid chain: Serine hydroxymethyltransferase (429 aa).

Residues leucine 128 and 132–134 contribute to the (6S)-5,6,7,8-tetrahydrofolate site; that span reads GHL. N6-(pyridoxal phosphate)lysine is present on lysine 237.

Belongs to the SHMT family. Homodimer. Requires pyridoxal 5'-phosphate as cofactor.

The protein localises to the cytoplasm. It catalyses the reaction (6R)-5,10-methylene-5,6,7,8-tetrahydrofolate + glycine + H2O = (6S)-5,6,7,8-tetrahydrofolate + L-serine. It participates in one-carbon metabolism; tetrahydrofolate interconversion. It functions in the pathway amino-acid biosynthesis; glycine biosynthesis; glycine from L-serine: step 1/1. Functionally, catalyzes the reversible interconversion of serine and glycine with tetrahydrofolate (THF) serving as the one-carbon carrier. This reaction serves as the major source of one-carbon groups required for the biosynthesis of purines, thymidylate, methionine, and other important biomolecules. Also exhibits THF-independent aldolase activity toward beta-hydroxyamino acids, producing glycine and aldehydes, via a retro-aldol mechanism. In Caulobacter vibrioides (strain ATCC 19089 / CIP 103742 / CB 15) (Caulobacter crescentus), this protein is Serine hydroxymethyltransferase.